The following is a 418-amino-acid chain: MKVLVLGAGVAGVSSAWYLAEAGHEVTVIDRAEGVAMETSFANAGQLSYGYTTPWAAPGIPTKALKWLFKSHPPLLFRPDGSLYQIEWLWQMLQHCTAARYQINKERMVRMSEYSREMFRRFEAQTGMNFEGRKKGTLQIFRQTKEVEAAKQDIAVLERYGVPYRRLKPEECAEFEPALARVTAKIAGGLHLPADATGDCRLFTENLYKLCQEKGVRFHFNQTISRIDHNGLRIKTVETETGRFEADAVVCALGCFSRTVLAQVDLNLPIYPVKGYSLTLPVTNSDGAPVSTVLDESYKVAITRFNNRIRVGGMAELSGYAIKLPEKRRETLALVVNDLFPEGGDLNQTLFWSGLRPMTPDSTPLIGRTRFDNLFLNTGHGTLGWTMSLGSAKLTADIVSGKDTEIRSDDLSLSRYQA.

3-17 (VLVLGAGVAGVSSAW) provides a ligand contact to FAD.

Belongs to the DadA oxidoreductase family. FAD serves as cofactor.

The enzyme catalyses a D-alpha-amino acid + A + H2O = a 2-oxocarboxylate + AH2 + NH4(+). Oxidative deamination of D-amino acids. This is D-amino acid dehydrogenase from Neisseria meningitidis serogroup A / serotype 4A (strain DSM 15465 / Z2491).